A 133-amino-acid chain; its full sequence is Inhibitor of g-type lysozyme (133 aa).

The signal sequence occupies residues 1–22 (MKIKSIRKAVLLLALLTSTSFA).

It localises to the periplasm. Functionally, inhibits activity of g-type lysozyme, which confers increased lysozyme tolerance to the bacterium. The protein is Inhibitor of g-type lysozyme (pliG) of Escherichia coli (strain K12).